The sequence spans 300 residues: Cutinase est2 (300 aa).

A signal peptide spans 1-39 (MSVTTPRRETSLLSRALRATAAAATAVVATVALAAPAQA). Y99 serves as a coordination point for poly(ethylene terephthalate). The active-site Nucleophile is the S169. Poly(ethylene terephthalate)-binding residues include M170 and W194. E213 provides a ligand contact to Ca(2+). Residue D215 is the Charge relay system of the active site. D243 is a binding site for Ca(2+). H247 functions as the Charge relay system in the catalytic mechanism. C280 and C298 are disulfide-bonded. E292 contributes to the Ca(2+) binding site.

This sequence belongs to the AB hydrolase superfamily. In terms of assembly, monomer. The cofactor is Ca(2+).

Its subcellular location is the secreted. The protein resides in the periplasm. The enzyme catalyses an acetyl ester + H2O = an aliphatic alcohol + acetate + H(+). It catalyses the reaction (ethylene terephthalate)(n) + H2O = (ethylene terephthalate)(n-1) + 4-[(2-hydroxyethoxy)carbonyl]benzoate + H(+). It carries out the reaction a butanoate ester + H2O = an aliphatic alcohol + butanoate + H(+). The catalysed reaction is cutin + H2O = cutin monomers.. The enzyme catalyses a hexanoate ester + H2O = an aliphatic alcohol + hexanoate + H(+). It catalyses the reaction an octanoate ester + H2O = an aliphatic alcohol + octanoate + H(+). Activated by calcium ions. Activated by magnesium ions. Activated by manganese ions. Inhibited by the serine hydrolase inhibitor phenylmethanesulfonyl fluoride (PMSF). Inhibited by the chelator ethylenediaminetetraacetic acid (EDTA). Inhibited by iron ions. Inhibited by aluminum ions. Inhibited by rubidium ions. Inhibited by lithium ions. In terms of biological role, catalyzes the hydrolysis of cutin, a polyester that forms the structure of plant cuticle. Shows esterase activity towards p-nitrophenol-linked aliphatic esters (pNP-aliphatic esters). Capable of degrading the plastic poly(ethylene terephthalate) (PET), the most abundant polyester plastic in the world. Can also depolymerize the synthetic polyesters poly(epsilon-caprolactone) (PCL), poly(butylene succinate-co-adipate) (PBSA), poly(butylene succinate) (PBS), and poly(lactic acid) (PLA). This chain is Cutinase est2, found in Thermobifida alba (Thermomonospora alba).